The sequence spans 707 residues: E3 ubiquitin-protein ligase Praja-2 (707 aa).

The span at 1–10 (MSQYTEKEPS) shows a compositional bias: basic and acidic residues. Disordered stretches follow at residues 1 to 23 (MSQYTEKEPSVMDQDSSKAAWPR), 75 to 120 (NTAG…PSVA), and 242 to 290 (AGDA…CVPG). An N-acetylserine modification is found at serine 2. The span at 109–119 (LNQSTESNPSV) shows a compositional bias: polar residues. Residues 246–276 (EAVHQDGQEFQRSSEDGIVRKRRQDDTDQGR) show a composition bias toward basic and acidic residues. Residues serine 306 and serine 320 each carry the phosphoserine modification. Serine 339 carries the phosphoserine; by PKA modification. Disordered stretches follow at residues 380–403 (VTPREAERHRATAENGATASGRQE) and 424–493 (EDSS…QTSL). Over residues 381-391 (TPREAERHRAT) the composition is skewed to basic and acidic residues. At serine 430 the chain carries Phosphoserine. A compositionally biased stretch (acidic residues) spans 465-481 (NEPELQSDSSGPEEENQ). Positions 482 to 491 (ELSLQEGEQT) are enriched in polar residues. Positions 530-707 (DGNNNLEDDS…PANDNAEEAP (178 aa)) are interaction with PRKAR1A, PRKAR2A and PRKAR2B. Positions 549–569 (WSLFDGFADGLGVAEAISYVD) are mediates interaction with TBC1D31. An RING-type; atypical zinc finger spans residues 633 to 674 (CPICCSEYIKDDIATELPCHHFFHKPCVSIWLQKSGTCPVCR). Positions 686 to 707 (AAASSEPDLDASPANDNAEEAP) are disordered.

As to quaternary structure, binds ubiquitin-conjugating enzymes (E2s). In vitro, interacts with the ubiquitin-conjugating enzyme, UBE2D2. The phosphorylated form interacts with PRKAR1A, PRKAR2A and PRKAR2B. Binds the catalytic subunits of cAMP-dependent protein kinase. Interacts with MFHAS1. Interacts with TBC1D31; the interaction is direct and recruits PJA2 to centrosomes. In terms of tissue distribution, highly expressed in the brain, in nerve cells but not in glial cells. Abundantly expressed in pyramidal neurons and in the CA3 region of apical dendrites. Colocalizes with PRKAR2B in dentate granule cells and at postsynaptic sites of primary hippocampal neurons.

It localises to the cytoplasm. Its subcellular location is the cell membrane. It is found in the endoplasmic reticulum membrane. The protein resides in the golgi apparatus membrane. The protein localises to the synapse. It localises to the postsynaptic density. Its subcellular location is the cytoskeleton. It is found in the microtubule organizing center. The protein resides in the centrosome. It catalyses the reaction S-ubiquitinyl-[E2 ubiquitin-conjugating enzyme]-L-cysteine + [acceptor protein]-L-lysine = [E2 ubiquitin-conjugating enzyme]-L-cysteine + N(6)-ubiquitinyl-[acceptor protein]-L-lysine.. It functions in the pathway protein modification; protein ubiquitination. Has E2-dependent E3 ubiquitin-protein ligase activity. Responsible for ubiquitination of cAMP-dependent protein kinase type I and type II-alpha/beta regulatory subunits and for targeting them for proteasomal degradation. Essential for PKA-mediated long-term memory processes. Through the ubiquitination of MFHAS1, positively regulates the TLR2 signaling pathway that leads to the activation of the downstream p38 and JNK MAP kinases and promotes the polarization of macrophages toward the pro-inflammatory M1 phenotype. Plays a role in ciliogenesis by ubiquitinating OFD1. The chain is E3 ubiquitin-protein ligase Praja-2 (Pja2) from Rattus norvegicus (Rat).